Consider the following 402-residue polypeptide: MIEFPVVLVINCGSSSVKFSVLDAASCEALITGIADGVNTENAFISVNGGEPAPLARKDYEGALAAIALELEARDLMGSVALIGHRIAHGGSVFSESTPITDEVIDQIREISPLAPLHNYANLSGVEAAKHLFPGVQQVAVFDTSFHQTLAPQAYLYGLPYRYFEELGVRRYGFHGTSHRYVAQQAYSLLDIPQQDSGLVIAHLGNGASICAVRNGESVDTSMGMTPLEGLVMGTRCGDVDFGAMAWIAQQTGQTLDDLERVVNKESGLLGISGLSSDLRTLEKAWHDGHERARLAIETFVHRIARHIAGHAASLHRLDGVVFTGGIGENSKLIRQLVTDRLKVFGITLDPLKNALPGSAGERIITTDDSDVPCAVIPTNEEKMIALDAIRLGKVHPAAAYA.

ATP contacts are provided by N11 and K18. Mg(2+) is bound at residue N11. R86 is a substrate binding site. D143 functions as the Proton donor/acceptor in the catalytic mechanism. ATP is bound by residues H175, 203–207 (HLGNG), 278–280 (DLR), and 326–330 (GIGEN).

Belongs to the acetokinase family. TdcD subfamily. In terms of assembly, homodimer. Mg(2+) serves as cofactor.

The enzyme catalyses propanoate + ATP = propanoyl phosphate + ADP. It participates in amino-acid degradation; L-threonine degradation via propanoate pathway; propanoate from L-threonine: step 4/4. Its function is as follows. Catalyzes the conversion of propionyl phosphate and ADP to propionate and ATP. The polypeptide is Propionate kinase (Enterobacter sp. (strain 638)).